The chain runs to 323 residues: Methenyltetrahydromethanopterin cyclohydrolase (323 aa).

This sequence belongs to the MCH family.

It localises to the cytoplasm. The catalysed reaction is 5,10-methenyl-5,6,7,8-tetrahydromethanopterin + H2O = N(5)-formyl-5,6,7,8-tetrahydromethanopterin + H(+). It participates in one-carbon metabolism; methanogenesis from CO(2); 5,10-methenyl-5,6,7,8-tetrahydromethanopterin from CO(2): step 3/3. Its function is as follows. Catalyzes the reversible interconversion of 5-formyl-H(4)MPT to methenyl-H(4)MPT(+). This is Methenyltetrahydromethanopterin cyclohydrolase from Methanococcus maripaludis (strain DSM 14266 / JCM 13030 / NBRC 101832 / S2 / LL).